Consider the following 332-residue polypeptide: Fructose-1,6-bisphosphatase class 1 (332 aa).

Positions 89, 110, 112, and 113 each coordinate Mg(2+). Substrate contacts are provided by residues 113–116 (DGSS), Asn-206, Tyr-239, 257–259 (YLY), and Lys-269. Residue Glu-275 coordinates Mg(2+).

This sequence belongs to the FBPase class 1 family. In terms of assembly, homotetramer. Mg(2+) is required as a cofactor.

Its subcellular location is the cytoplasm. It carries out the reaction beta-D-fructose 1,6-bisphosphate + H2O = beta-D-fructose 6-phosphate + phosphate. Its pathway is carbohydrate biosynthesis; gluconeogenesis. In Escherichia coli O157:H7, this protein is Fructose-1,6-bisphosphatase class 1.